We begin with the raw amino-acid sequence, 264 residues long: Thymidylate synthase (264 aa).

Residue arginine 21 participates in dUMP binding. Residue histidine 51 participates in (6R)-5,10-methylene-5,6,7,8-tetrahydrofolate binding. 126 to 127 is a binding site for dUMP; that stretch reads RR. The active-site Nucleophile is the cysteine 146. DUMP-binding positions include 166 to 169, asparagine 177, and 207 to 209; these read RSCD and HLY. Aspartate 169 provides a ligand contact to (6R)-5,10-methylene-5,6,7,8-tetrahydrofolate. Alanine 263 is a (6R)-5,10-methylene-5,6,7,8-tetrahydrofolate binding site.

Belongs to the thymidylate synthase family. Bacterial-type ThyA subfamily. As to quaternary structure, homodimer.

The protein localises to the cytoplasm. It catalyses the reaction dUMP + (6R)-5,10-methylene-5,6,7,8-tetrahydrofolate = 7,8-dihydrofolate + dTMP. It participates in pyrimidine metabolism; dTTP biosynthesis. Catalyzes the reductive methylation of 2'-deoxyuridine-5'-monophosphate (dUMP) to 2'-deoxythymidine-5'-monophosphate (dTMP) while utilizing 5,10-methylenetetrahydrofolate (mTHF) as the methyl donor and reductant in the reaction, yielding dihydrofolate (DHF) as a by-product. This enzymatic reaction provides an intracellular de novo source of dTMP, an essential precursor for DNA biosynthesis. This Escherichia coli O9:H4 (strain HS) protein is Thymidylate synthase.